Consider the following 396-residue polypeptide: Cyclic GMP-AMP synthase-like receptor (396 aa).

Residues serine 63 and 75–77 each bind ATP; that span reads EFD. Glutamate 75, aspartate 77, and aspartate 194 together coordinate Mg(2+). Residue aspartate 194 coordinates GTP. Residues 241–244, lysine 262, and 275–279 each bind ATP; these read QEQE and SYYLK. Residues valine 286, glutamate 287, and aspartate 292 each contribute to the Mn(2+) site. Residues 376–396 form a disordered region; sequence IMNGGNPQQSANAENGSCLSM. The segment covering 380 to 396 has biased composition (polar residues); that stretch reads GNPQQSANAENGSCLSM.

The protein belongs to the mab-21 family. It depends on Mg(2+) as a cofactor. Requires Mn(2+) as cofactor.

The catalysed reaction is GTP + ATP = 2',3'-cGAMP + 2 diphosphate. The enzyme catalyses GTP + ATP = pppGp(2'-5')A + diphosphate. It catalyses the reaction pppGp(2'-5')A = 2',3'-cGAMP + diphosphate. Its function is as follows. Nucleotidyltransferase that catalyzes the formation of cyclic GMP-AMP (2',3'-cGAMP) from ATP and GTP and plays a key role in innate immunity. Acts as a key sensor of double-stranded RNA (dsRNA), the presence of dsRNA in the cytoplasm being a danger signal that triggers the immune responses. Directly binds dsRNA, activating the nucleotidyltransferase activity, leading to synthesis of 2',3'-cGAMP, a second messenger that binds to and activates Sting, thereby triggering the immune response via activation of the NF-kappa-B transcription factor. In Aethina tumida (Small hive beetle), this protein is Cyclic GMP-AMP synthase-like receptor.